Consider the following 295-residue polypeptide: Ribosomal RNA small subunit methyltransferase A (295 aa).

S-adenosyl-L-methionine is bound by residues Asn-29, Leu-31, Gly-56, Glu-77, Asp-102, and Asn-128.

It belongs to the class I-like SAM-binding methyltransferase superfamily. rRNA adenine N(6)-methyltransferase family. RsmA subfamily.

It localises to the cytoplasm. The enzyme catalyses adenosine(1518)/adenosine(1519) in 16S rRNA + 4 S-adenosyl-L-methionine = N(6)-dimethyladenosine(1518)/N(6)-dimethyladenosine(1519) in 16S rRNA + 4 S-adenosyl-L-homocysteine + 4 H(+). Its function is as follows. Specifically dimethylates two adjacent adenosines (A1518 and A1519) in the loop of a conserved hairpin near the 3'-end of 16S rRNA in the 30S particle. May play a critical role in biogenesis of 30S subunits. This chain is Ribosomal RNA small subunit methyltransferase A, found in Listeria welshimeri serovar 6b (strain ATCC 35897 / DSM 20650 / CCUG 15529 / CIP 8149 / NCTC 11857 / SLCC 5334 / V8).